The chain runs to 417 residues: UDP-N-acetylglucosamine 1-carboxyvinyltransferase (417 aa).

22–23 (KN) lines the phosphoenolpyruvate pocket. Arg-92 provides a ligand contact to UDP-N-acetyl-alpha-D-glucosamine. Catalysis depends on Cys-116, which acts as the Proton donor. At Cys-116 the chain carries 2-(S-cysteinyl)pyruvic acid O-phosphothioketal. Residues Asp-304 and Val-326 each contribute to the UDP-N-acetyl-alpha-D-glucosamine site.

It belongs to the EPSP synthase family. MurA subfamily.

Its subcellular location is the cytoplasm. The catalysed reaction is phosphoenolpyruvate + UDP-N-acetyl-alpha-D-glucosamine = UDP-N-acetyl-3-O-(1-carboxyvinyl)-alpha-D-glucosamine + phosphate. It functions in the pathway cell wall biogenesis; peptidoglycan biosynthesis. Functionally, cell wall formation. Adds enolpyruvyl to UDP-N-acetylglucosamine. The sequence is that of UDP-N-acetylglucosamine 1-carboxyvinyltransferase from Syntrophotalea carbinolica (strain DSM 2380 / NBRC 103641 / GraBd1) (Pelobacter carbinolicus).